Here is a 188-residue protein sequence, read N- to C-terminus: Peptidyl-tRNA hydrolase (188 aa).

TRNA is bound at residue F14. Residue H19 is the Proton acceptor of the active site. TRNA-binding residues include Y64, N66, and N112.

This sequence belongs to the PTH family. Monomer.

It is found in the cytoplasm. The catalysed reaction is an N-acyl-L-alpha-aminoacyl-tRNA + H2O = an N-acyl-L-amino acid + a tRNA + H(+). Its function is as follows. Hydrolyzes ribosome-free peptidyl-tRNAs (with 1 or more amino acids incorporated), which drop off the ribosome during protein synthesis, or as a result of ribosome stalling. Functionally, catalyzes the release of premature peptidyl moieties from peptidyl-tRNA molecules trapped in stalled 50S ribosomal subunits, and thus maintains levels of free tRNAs and 50S ribosomes. The chain is Peptidyl-tRNA hydrolase from Aster yellows witches'-broom phytoplasma (strain AYWB).